The sequence spans 427 residues: 3-phosphoshikimate 1-carboxyvinyltransferase (427 aa).

Residues Lys-22, Ser-23, and Arg-27 each contribute to the 3-phosphoshikimate site. Lys-22 lines the phosphoenolpyruvate pocket. Residues Gly-96 and Arg-124 each coordinate phosphoenolpyruvate. 3-phosphoshikimate-binding residues include Ser-169, Ser-170, Gln-171, Ser-197, Asp-313, Asn-336, and Lys-340. Gln-171 is a phosphoenolpyruvate binding site. Residue Asp-313 is the Proton acceptor of the active site. The phosphoenolpyruvate site is built by Arg-344, Arg-386, and Lys-411.

The protein belongs to the EPSP synthase family. Monomer.

Its subcellular location is the cytoplasm. The enzyme catalyses 3-phosphoshikimate + phosphoenolpyruvate = 5-O-(1-carboxyvinyl)-3-phosphoshikimate + phosphate. It participates in metabolic intermediate biosynthesis; chorismate biosynthesis; chorismate from D-erythrose 4-phosphate and phosphoenolpyruvate: step 6/7. Its function is as follows. Catalyzes the transfer of the enolpyruvyl moiety of phosphoenolpyruvate (PEP) to the 5-hydroxyl of shikimate-3-phosphate (S3P) to produce enolpyruvyl shikimate-3-phosphate and inorganic phosphate. The protein is 3-phosphoshikimate 1-carboxyvinyltransferase of Citrobacter koseri (strain ATCC BAA-895 / CDC 4225-83 / SGSC4696).